The primary structure comprises 180 residues: uncharacterized protein (180 aa).

The first 24 residues, 1–24 (MKKKTIFQCVILFFSILNIHVGMA), serve as a signal peptide directing secretion.

Its function is as follows. Part of the elfADCG-ycbUVF fimbrial operon, which promotes adhesion of bacteria to different abiotic surfaces. This is an uncharacterized protein from Escherichia coli (strain K12).